The chain runs to 133 residues: Protein Wnt-4 (133 aa).

The O-palmitoleoyl serine; by PORCN moiety is linked to residue serine 1. 2 disulfides stabilise this stretch: cysteine 69–cysteine 114 and cysteine 99–cysteine 109. Asparagine 100 is a glycosylation site (N-linked (GlcNAc...) asparagine).

The protein belongs to the Wnt family. Palmitoleoylation is required for efficient binding to frizzled receptors. Depalmitoleoylation leads to Wnt signaling pathway inhibition.

It localises to the secreted. The protein resides in the extracellular space. Its subcellular location is the extracellular matrix. Ligand for members of the frizzled family of seven transmembrane receptors. Plays an important role in embryonic development. This chain is Protein Wnt-4 (WNT-4), found in Strongylocentrotus purpuratus (Purple sea urchin).